A 187-amino-acid polypeptide reads, in one-letter code: Elongation factor P (187 aa).

The protein belongs to the elongation factor P family.

The protein localises to the cytoplasm. The protein operates within protein biosynthesis; polypeptide chain elongation. Involved in peptide bond synthesis. Stimulates efficient translation and peptide-bond synthesis on native or reconstituted 70S ribosomes in vitro. Probably functions indirectly by altering the affinity of the ribosome for aminoacyl-tRNA, thus increasing their reactivity as acceptors for peptidyl transferase. This Corynebacterium urealyticum (strain ATCC 43042 / DSM 7109) protein is Elongation factor P.